The sequence spans 217 residues: 3-demethoxyubiquinol 3-hydroxylase (217 aa).

Residues Glu-66, Glu-96, His-99, Glu-148, Glu-180, and His-183 each contribute to the Fe cation site.

Belongs to the COQ7 family. It depends on Fe cation as a cofactor.

Its subcellular location is the cell membrane. The catalysed reaction is a 5-methoxy-2-methyl-3-(all-trans-polyprenyl)benzene-1,4-diol + AH2 + O2 = a 3-demethylubiquinol + A + H2O. The protein operates within cofactor biosynthesis; ubiquinone biosynthesis. Its function is as follows. Catalyzes the hydroxylation of 2-nonaprenyl-3-methyl-6-methoxy-1,4-benzoquinol during ubiquinone biosynthesis. The chain is 3-demethoxyubiquinol 3-hydroxylase from Xanthomonas axonopodis pv. citri (strain 306).